The sequence spans 309 residues: MQKQHNVVAGVDMGATHIRFCLRTAEGETLHCEKKRTAEVIAPGLVSGIGEMIDEQLRRFNARCHGLVMGFPALVSKDKRTIISTPNLPLTAADLYDLADKLENTLNCPVEFSRDVNLQLSWDVVENRLTQQLVLAAYLGTGMGFAVWMNGAPWTGAHGVAGELGHIPLGDMTQHCACGNPGCLETNCSGMALRRWYEQQPRNYPLRDLFVHAENAPFVQSLLENAARAIATSINLFDPDAVILGGGVMDMPAFPRETLVAMTQKYLRRPLPHQVVRFIAASSSDFNGAQGAAILAHQRFLPQFCAKAP.

ATP-binding positions include 10-17 (GVDMGATH) and 142-149 (GMGFAVWM).

It belongs to the ROK (NagC/XylR) family.

The catalysed reaction is D-allose + ATP = D-allose 6-phosphate + ADP + H(+). The protein operates within carbohydrate degradation; D-allose degradation. Its function is as follows. Catalyzes the phosphorylation of D-allose to D-allose 6-phosphate. Also has low level glucokinase activity in vitro. This chain is D-allose kinase, found in Escherichia coli (strain K12).